Reading from the N-terminus, the 315-residue chain is MRMCDRGIQMLITTVGAFAAFSLMTIAVGTDYWLYSRGVCRTKSTSDNETSRKNEEVMTHSGLWRTCCLEGAFRGVCKKIDHFPEDADYEQDTAEYLLRAVRASSVFPILSVTLLFFGGLCVAASEFHRSRHNVILSAGIFFVSAGLSNIIGIIVYISANAGDPGQRDSKKSYSYGWSFYFGAFSFIIAEIVGVVAVHIYIEKHQQLRAKSHSEFLKKSTFARLPPYRYRFRRRSSSRSTEPRSRDLSPISKGFHTIPSTDISMFTLSRDPSKITMGTLLNSDRDHAFLQFHNSTPKEFKESLHNNPANRRTTPV.

The next 4 helical transmembrane spans lie at 8-28 (IQML…TIAV), 104-124 (SSVF…CVAA), 135-155 (ILSA…GIIV), and 181-201 (FGAF…HIYI). At Ser-248 the chain carries Phosphoserine.

Belongs to the PMP-22/EMP/MP20 family. CACNG subfamily. As to quaternary structure, the L-type calcium channel is composed of five subunits: alpha-1, alpha-2/delta, beta and gamma. Acts as an auxiliary subunit for AMPA-selective glutamate receptors (AMPARs). Found in a complex with GRIA1, GRIA2, GRIA3, GRIA4, CNIH2, CNIH3, CACNG2, CACNG4, CACNG5, CACNG7 and CACNG8. Interacts with AP4M1 and GRIA1; associates GRIA1 with the adaptor protein complex 4 (AP-4) to target GRIA1 to the somatodendritic compartment of neurons.

Its subcellular location is the membrane. Functionally, regulates the trafficking to the somatodendritic compartment and gating properties of AMPA-selective glutamate receptors (AMPARs). Promotes their targeting to the cell membrane and synapses and modulates their gating properties by slowing their rates of activation, deactivation and desensitization. Does not show subunit-specific AMPA receptor regulation and regulates all AMPAR subunits. Thought to stabilize the calcium channel in an inactivated (closed) state. This chain is Voltage-dependent calcium channel gamma-3 subunit (CACNG3), found in Homo sapiens (Human).